Consider the following 1165-residue polypeptide: Integrin alpha-L (1165 aa).

The first 23 residues, 1–23, serve as a signal peptide directing secretion; the sequence is MNSCIIVLRLLLSGPFVFAPAWS. The Extracellular portion of the chain corresponds to 24–1084; that stretch reads YNLDVRHVQN…MKVDLVYEKE (1061 aa). FG-GAP repeat units lie at residues 29–80 and 81–138; these read RHVQ…DCLP and VTLS…GPVL. Residue Asn33 is glycosylated (N-linked (GlcNAc...) asparagine). Cys71 and Cys78 form a disulfide bridge. An N-linked (GlcNAc...) asparagine glycan is attached at Asn86. The cysteines at positions 108 and 126 are disulfide-linked. Residues 153–324 form the VWFA domain; the sequence is DLVFLFDGSM…EKLKDLFTEL (172 aa). Residue Asn185 is glycosylated (N-linked (GlcNAc...) asparagine). 5 FG-GAP repeats span residues 335–386, 387–442, 443–503, 504–560, and 564–624; these read SKQD…SSTF, VGNE…GGPW, SQIQ…EFQM, VSEL…GLSP, and QRIE…FSPA. Residues Asp465, Asp467, Asp469, Glu473, Asp527, Asn529, Asp531, Asp535, Asp587, Asp591, and Asp595 each coordinate Ca(2+). 3 N-linked (GlcNAc...) asparagine glycosylation sites follow: Asn646, Asn667, and Asn723. A disulfide bond links Cys650 and Cys704. Disulfide bonds link Cys768/Cys774 and Cys842/Cys858. Asn859, Asn894, and Asn929 each carry an N-linked (GlcNAc...) asparagine glycan. Cystine bridges form between Cys994–Cys1009 and Cys1017–Cys1048. N-linked (GlcNAc...) asparagine glycans are attached at residues Asn1056 and Asn1067. The chain crosses the membrane as a helical span at residues 1085–1105; sequence MLYLYVLSGIGGLLLLFLIFI. At 1106–1165 the chain is on the cytoplasmic side; sequence ALYKVGFFKRNLKEKMEANVDASSEIPGEDAGQPELEKECKDPGCLEPLQKTDEDGSGGD. A GFFKR motif motif is present at residues 1111-1115; that stretch reads GFFKR. Positions 1123 to 1165 are disordered; sequence ANVDASSEIPGEDAGQPELEKECKDPGCLEPLQKTDEDGSGGD. Residues 1140–1159 are compositionally biased toward basic and acidic residues; the sequence is ELEKECKDPGCLEPLQKTDE.

The protein belongs to the integrin alpha chain family. In terms of assembly, heterodimer of an alpha and a beta subunit. The ITGAL alpha subunit associates with the ITGB2 beta subunit. Interacts with THBD. Interacts with CD226. Post-translationally, in resting T-cells, up to 40% of surface ITGAL is constitutively phosphorylated. Phosphorylation causes conformational changes needed for ligand binding and is necessary for the activation by some physiological agents.

The protein localises to the cell membrane. Its function is as follows. Integrin ITGAL/ITGB2 is a receptor for ICAM1, ICAM2, ICAM3 and ICAM4. Integrin ITGAL/ITGB2 is a receptor for F11R. Integrin ITGAL/ITGB2 is a receptor for the secreted form of ubiquitin-like protein ISG15; the interaction is mediated by ITGAL. Involved in a variety of immune phenomena including leukocyte-endothelial cell interaction, cytotoxic T-cell mediated killing, and antibody dependent killing by granulocytes and monocytes. Contributes to natural killer cell cytotoxicity. Involved in leukocyte adhesion and transmigration of leukocytes including T-cells and neutrophils. Acts as a platform at the immunological synapse to translate TCR engagement and density of the ITGAL ligand ICAM1 into graded adhesion. Required for generation of common lymphoid progenitor cells in bone marrow, indicating the role in lymphopoiesis. Integrin ITGAL/ITGB2 in association with ICAM3, contributes to apoptotic neutrophil phagocytosis by macrophages. This Bos taurus (Bovine) protein is Integrin alpha-L.